Reading from the N-terminus, the 121-residue chain is UPF0344 protein BCE_1257 (121 aa).

The next 4 membrane-spanning stretches (helical) occupy residues 6-26, 38-58, 65-85, and 92-112; these read ITAW…YSAG, LMYI…VKTA, WYGL…MVLV, and PTGA…YLGL.

It belongs to the UPF0344 family.

It is found in the cell membrane. The sequence is that of UPF0344 protein BCE_1257 from Bacillus cereus (strain ATCC 10987 / NRS 248).